Reading from the N-terminus, the 260-residue chain is Tropinone reductase homolog At2g29330 (260 aa).

Residue 13–37 coordinates NADP(+); it reads LVTGGASGIGHAIVEELAGFGAKIH. Ser146 is a substrate binding site. Tyr159 functions as the Proton acceptor in the catalytic mechanism.

It belongs to the short-chain dehydrogenases/reductases (SDR) family. SDR65C subfamily.

In terms of biological role, reductase active only on small flexible lipophilic carbonyls. No activity with cyclic monoterpenes, tropinone, nitrogen-containing tropinone analogs, tropine or pseudotropine as substrate. This is Tropinone reductase homolog At2g29330 from Arabidopsis thaliana (Mouse-ear cress).